The following is a 203-amino-acid chain: Imidazole glycerol phosphate synthase subunit HisH 1 (203 aa).

Positions 1–203 (MIAIIDYNAG…KMIENFVELI (203 aa)) constitute a Glutamine amidotransferase type-1 domain. The active-site Nucleophile is the Cys82. Residues His184 and Glu186 contribute to the active site.

In terms of assembly, heterodimer of HisH and HisF.

The protein resides in the cytoplasm. It carries out the reaction 5-[(5-phospho-1-deoxy-D-ribulos-1-ylimino)methylamino]-1-(5-phospho-beta-D-ribosyl)imidazole-4-carboxamide + L-glutamine = D-erythro-1-(imidazol-4-yl)glycerol 3-phosphate + 5-amino-1-(5-phospho-beta-D-ribosyl)imidazole-4-carboxamide + L-glutamate + H(+). It catalyses the reaction L-glutamine + H2O = L-glutamate + NH4(+). The protein operates within amino-acid biosynthesis; L-histidine biosynthesis; L-histidine from 5-phospho-alpha-D-ribose 1-diphosphate: step 5/9. Its function is as follows. IGPS catalyzes the conversion of PRFAR and glutamine to IGP, AICAR and glutamate. The HisH subunit provides the glutamine amidotransferase activity that produces the ammonia necessary to HisF for the synthesis of IGP and AICAR. This Methanococcus maripaludis (strain DSM 14266 / JCM 13030 / NBRC 101832 / S2 / LL) protein is Imidazole glycerol phosphate synthase subunit HisH 1 (hisH1).